The primary structure comprises 345 residues: Phosphoribosylformylglycinamidine cyclo-ligase (345 aa).

This sequence belongs to the AIR synthase family.

The protein localises to the cytoplasm. The catalysed reaction is 2-formamido-N(1)-(5-O-phospho-beta-D-ribosyl)acetamidine + ATP = 5-amino-1-(5-phospho-beta-D-ribosyl)imidazole + ADP + phosphate + H(+). The protein operates within purine metabolism; IMP biosynthesis via de novo pathway; 5-amino-1-(5-phospho-D-ribosyl)imidazole from N(2)-formyl-N(1)-(5-phospho-D-ribosyl)glycinamide: step 2/2. This is Phosphoribosylformylglycinamidine cyclo-ligase from Escherichia fergusonii (strain ATCC 35469 / DSM 13698 / CCUG 18766 / IAM 14443 / JCM 21226 / LMG 7866 / NBRC 102419 / NCTC 12128 / CDC 0568-73).